A 611-amino-acid chain; its full sequence is Dihydroxy-acid dehydratase (611 aa).

A Mg(2+)-binding site is contributed by Asp-81. Cys-122 is a [2Fe-2S] cluster binding site. Residues Asp-123 and Lys-124 each coordinate Mg(2+). An N6-carboxylysine modification is found at Lys-124. Cys-195 contacts [2Fe-2S] cluster. Glu-491 provides a ligand contact to Mg(2+). Ser-517 functions as the Proton acceptor in the catalytic mechanism.

Belongs to the IlvD/Edd family. As to quaternary structure, homodimer. It depends on [2Fe-2S] cluster as a cofactor. The cofactor is Mg(2+).

The catalysed reaction is (2R)-2,3-dihydroxy-3-methylbutanoate = 3-methyl-2-oxobutanoate + H2O. It carries out the reaction (2R,3R)-2,3-dihydroxy-3-methylpentanoate = (S)-3-methyl-2-oxopentanoate + H2O. The protein operates within amino-acid biosynthesis; L-isoleucine biosynthesis; L-isoleucine from 2-oxobutanoate: step 3/4. It participates in amino-acid biosynthesis; L-valine biosynthesis; L-valine from pyruvate: step 3/4. Functionally, functions in the biosynthesis of branched-chain amino acids. Catalyzes the dehydration of (2R,3R)-2,3-dihydroxy-3-methylpentanoate (2,3-dihydroxy-3-methylvalerate) into 2-oxo-3-methylpentanoate (2-oxo-3-methylvalerate) and of (2R)-2,3-dihydroxy-3-methylbutanoate (2,3-dihydroxyisovalerate) into 2-oxo-3-methylbutanoate (2-oxoisovalerate), the penultimate precursor to L-isoleucine and L-valine, respectively. This is Dihydroxy-acid dehydratase from Brucella melitensis biotype 1 (strain ATCC 23456 / CCUG 17765 / NCTC 10094 / 16M).